The primary structure comprises 365 residues: 3-dehydroquinate synthase (365 aa).

NAD(+)-binding positions include 72–77 (SGEKEK), 130–131 (TT), K142, and K151. Zn(2+) contacts are provided by E184, H247, and H264.

Belongs to the sugar phosphate cyclases superfamily. Dehydroquinate synthase family. Requires Co(2+) as cofactor. Zn(2+) serves as cofactor. NAD(+) is required as a cofactor.

Its subcellular location is the cytoplasm. It catalyses the reaction 7-phospho-2-dehydro-3-deoxy-D-arabino-heptonate = 3-dehydroquinate + phosphate. It participates in metabolic intermediate biosynthesis; chorismate biosynthesis; chorismate from D-erythrose 4-phosphate and phosphoenolpyruvate: step 2/7. Its function is as follows. Catalyzes the conversion of 3-deoxy-D-arabino-heptulosonate 7-phosphate (DAHP) to dehydroquinate (DHQ). The chain is 3-dehydroquinate synthase from Bacillus cereus (strain AH187).